The following is a 477-amino-acid chain: Glycogen synthase (477 aa).

Position 15 (lysine 15) interacts with ADP-alpha-D-glucose.

The protein belongs to the glycosyltransferase 1 family. Bacterial/plant glycogen synthase subfamily.

It catalyses the reaction [(1-&gt;4)-alpha-D-glucosyl](n) + ADP-alpha-D-glucose = [(1-&gt;4)-alpha-D-glucosyl](n+1) + ADP + H(+). It participates in glycan biosynthesis; glycogen biosynthesis. Functionally, synthesizes alpha-1,4-glucan chains using ADP-glucose. This is Glycogen synthase from Salmonella typhi.